The sequence spans 50 residues: Large ribosomal subunit protein bL32A (50 aa).

Residues methionine 1–glutamine 19 show a composition bias toward basic residues. A disordered region spans residues methionine 1–lysine 21.

The protein belongs to the bacterial ribosomal protein bL32 family.

This chain is Large ribosomal subunit protein bL32A, found in Saccharopolyspora erythraea (strain ATCC 11635 / DSM 40517 / JCM 4748 / NBRC 13426 / NCIMB 8594 / NRRL 2338).